Consider the following 566-residue polypeptide: Type 3 secretion system secretin (566 aa).

A signal peptide spans 1 to 22; it reads MKKFNIKSLTLLIVLLPLIVNA.

This sequence belongs to the bacterial secretin family. T3SS SctC subfamily. As to quaternary structure, the core secretion machinery of the T3SS is composed of approximately 20 different proteins, including cytoplasmic components, a base, an export apparatus and a needle. This subunit is part of the base, which anchors the injectisome in the bacterial cell envelope. Forms a stable homooligomeric complex.

It localises to the cell outer membrane. Its function is as follows. Component of the type III secretion system (T3SS), also called injectisome, which is used to inject bacterial effector proteins into eukaryotic host cells. Forms a ring-shaped multimeric structure with an apparent central pore in the outer membrane. This chain is Type 3 secretion system secretin, found in Shigella sonnei.